We begin with the raw amino-acid sequence, 156 residues long: Putative pre-16S rRNA nuclease (156 aa).

It belongs to the YqgF nuclease family.

The protein localises to the cytoplasm. Could be a nuclease involved in processing of the 5'-end of pre-16S rRNA. The chain is Putative pre-16S rRNA nuclease from Ehrlichia ruminantium (strain Welgevonden).